The primary structure comprises 958 residues: UvrABC system protein A (958 aa).

An ABC transporter 1 domain is found at 1-232 (MQSKSIKIQG…IETALKLGEG (232 aa)). 33–40 (GLSGSGKS) contributes to the ATP binding site. Residues 252-279 (CPICGFSIGELEPRLFSFNSPFGACPSC) form a C4-type zinc finger. 2 consecutive ABC transporter domains span residues 315–593 (QYYP…KYLS) and 604–935 (RRKP…GKYL). ATP is bound at residue 639-646 (GVSGSGKS). A C4-type zinc finger spans residues 738–764 (CEACRGDGILKIEMHFLPDVYVPCEVC).

The protein belongs to the ABC transporter superfamily. UvrA family. Forms a heterotetramer with UvrB during the search for lesions.

The protein localises to the cytoplasm. Functionally, the UvrABC repair system catalyzes the recognition and processing of DNA lesions. UvrA is an ATPase and a DNA-binding protein. A damage recognition complex composed of 2 UvrA and 2 UvrB subunits scans DNA for abnormalities. When the presence of a lesion has been verified by UvrB, the UvrA molecules dissociate. The sequence is that of UvrABC system protein A from Oceanobacillus iheyensis (strain DSM 14371 / CIP 107618 / JCM 11309 / KCTC 3954 / HTE831).